Here is a 226-residue protein sequence, read N- to C-terminus: Peroxiredoxin-like 2C (226 aa).

The protein belongs to the peroxiredoxin-like PRXL2 family. PRXL2C subfamily. As to expression, expressed in gastric tissues.

Functionally, may positively regulate ERK1/2 signaling and AKT1 activation leading to HIF1A up-regulation with an increased expression of glycolysis genes and enhanced glycolysis. This chain is Peroxiredoxin-like 2C, found in Homo sapiens (Human).